A 585-amino-acid chain; its full sequence is MTTSATEKALEDRAKSLHKKEKKASAKAAAAAGASASTSLEGSPSPASPAKKDKKDKKDKKDKKRSADDADADDDEKAAKKRRKEEKKAKKAAAKSGAATSLESTPAASPAPAASSSASAASFTPTNPAAARAFVESHNITIEAPEESNERPPLPMVDFRELDGKVDAAVKKTLDSQGFSTPTPIQACCWPVLLQNKDVVGIAETGSGKTFAFGLPALQHLVTKHKVLDSGKKKAKGAQVNVLVIAPTRELAIQTEENMAKLGKSMGIGMICLYGGVSKQEQVRLLNQSPPVRIVVGTPGRVLDMARDGSLDLSGVTYLVLDEADRMLDKGFEPDIRAIIGMCKSREEGRHTSMFSATWPPAVRGLAESFMNGPVRVTVGSDELSANRRVEQTVEVLADGYAKERRLNDFLRSVNAQRSKDKILIFALYKKEAQRIEQTLRRGGFKVSGIHGDLGQNERIASLERFKSAETPLLVATDVAARGLDIPNVEHVVNYTFPLTIEDYVHRIGRTGRGGKTGKSLTFFTEMDKAHAGELIRVLKDADQKVPDALTKFPTTIKKKTHSSYGDHFKELVPGKAKKITFDDD.

A disordered region spans residues 1–124 (MTTSATEKAL…SSSASAASFT (124 aa)). A compositionally biased stretch (low complexity) spans 26–43 (AKAAAAAGASASTSLEGS). 2 stretches are compositionally biased toward basic residues: residues 52-64 (KDKK…KDKK) and 79-93 (AKKR…KKAA). Residues 94-124 (AKSGAATSLESTPAASPAPAASSSASAASFT) are compositionally biased toward low complexity. The Q motif signature appears at 159-187 (FRELDGKVDAAVKKTLDSQGFSTPTPIQA). A Helicase ATP-binding domain is found at 190-377 (WPVLLQNKDV…ESFMNGPVRV (188 aa)). An ATP-binding site is contributed by 203–210 (AETGSGKT). The short motif at 322 to 325 (DEAD) is the DEAD box element. Residues 406-554 (RLNDFLRSVN…KVPDALTKFP (149 aa)) enclose the Helicase C-terminal domain.

Belongs to the DEAD box helicase family. DDX5/DBP2 subfamily.

It is found in the nucleus. The protein localises to the nucleolus. The enzyme catalyses ATP + H2O = ADP + phosphate + H(+). Its function is as follows. ATP-dependent RNA helicase required for 60S ribosomal subunit synthesis. Involved in efficient pre-rRNA processing, predominantly at site A3, which is necessary for the normal formation of 25S and 5.8S rRNAs. This Mycosarcoma maydis (Corn smut fungus) protein is ATP-dependent RNA helicase DBP3 (DBP3).